The primary structure comprises 598 residues: Auxin response factor 22 (598 aa).

The TF-B3 DNA-binding region spans 124–226; it reads NSFTKVLTAS…ELRVGIRRAG (103 aa). Residues 509–590 enclose the PB1 domain; the sequence is RTCTKVQMQG…MVKKILIFKR (82 aa).

It belongs to the ARF family. In terms of assembly, homodimers and heterodimers.

Its subcellular location is the nucleus. Functionally, auxin response factors (ARFs) are transcriptional factors that bind specifically to the DNA sequence 5'-TGTCTC-3' found in the auxin-responsive promoter elements (AuxREs). Could act as transcriptional activator or repressor. Formation of heterodimers with Aux/IAA proteins may alter their ability to modulate early auxin response genes expression. The chain is Auxin response factor 22 (ARF22) from Arabidopsis thaliana (Mouse-ear cress).